Reading from the N-terminus, the 158-residue chain is Transcription elongation factor GreA (158 aa).

The stretch at 1–67 forms a coiled coil; that stretch reads MSNNIPLTKE…FIEGRIQELQ (67 aa).

The protein belongs to the GreA/GreB family.

Necessary for efficient RNA polymerase transcription elongation past template-encoded arresting sites. The arresting sites in DNA have the property of trapping a certain fraction of elongating RNA polymerases that pass through, resulting in locked ternary complexes. Cleavage of the nascent transcript by cleavage factors such as GreA or GreB allows the resumption of elongation from the new 3'terminus. GreA releases sequences of 2 to 3 nucleotides. The polypeptide is Transcription elongation factor GreA (Trichlorobacter lovleyi (strain ATCC BAA-1151 / DSM 17278 / SZ) (Geobacter lovleyi)).